The following is a 253-amino-acid chain: Imidazole glycerol phosphate synthase subunit HisF (253 aa).

Catalysis depends on residues D11 and D130.

This sequence belongs to the HisA/HisF family. As to quaternary structure, heterodimer of HisH and HisF.

The protein localises to the cytoplasm. The enzyme catalyses 5-[(5-phospho-1-deoxy-D-ribulos-1-ylimino)methylamino]-1-(5-phospho-beta-D-ribosyl)imidazole-4-carboxamide + L-glutamine = D-erythro-1-(imidazol-4-yl)glycerol 3-phosphate + 5-amino-1-(5-phospho-beta-D-ribosyl)imidazole-4-carboxamide + L-glutamate + H(+). It participates in amino-acid biosynthesis; L-histidine biosynthesis; L-histidine from 5-phospho-alpha-D-ribose 1-diphosphate: step 5/9. Its function is as follows. IGPS catalyzes the conversion of PRFAR and glutamine to IGP, AICAR and glutamate. The HisF subunit catalyzes the cyclization activity that produces IGP and AICAR from PRFAR using the ammonia provided by the HisH subunit. The protein is Imidazole glycerol phosphate synthase subunit HisF of Clostridium beijerinckii (strain ATCC 51743 / NCIMB 8052) (Clostridium acetobutylicum).